The following is a 551-amino-acid chain: Cleavage and polyadenylation specificity factor subunit 6 (551 aa).

The tract at residues 1-213 (MADGVDHIDI…RGRFPGAVPG (213 aa)) is necessary for interaction with NXF1. The RRM domain occupies 81 to 161 (IALYIGNLTW…QSPVVTPCNK (81 aa)). Residues 81-161 (IALYIGNLTW…QSPVVTPCNK (81 aa)) are necessary for interaction with NUDT21/CPSF5. Positions 81-161 (IALYIGNLTW…QSPVVTPCNK (81 aa)) are necessary for nuclear paraspeckles localization. T157 carries the phosphothreonine modification. A compositionally biased stretch (polar residues) spans 169-180 (MQSRKTTQSGQM). 2 disordered regions span residues 169 to 411 (MQSR…PLSE) and 477 to 551 (LHGI…YRHR). Over residues 184 to 193 (GKAGPPGGGS) the composition is skewed to gly residues. Positions 202 to 206 (RGRGR) match the GAR motif. A compositionally biased stretch (low complexity) spans 207 to 219 (FPGAVPGGDRFPG). Pro residues-rich tracts occupy residues 220–265 (PAGP…PLAG), 285–366 (GQPP…PPPT), and 377–388 (GPPPTDPYGRPP). Positions 389-404 (PYDRGDYGPPGREMDT) are enriched in basic and acidic residues. A phosphothreonine mark is found at T404 and T407. The segment at 404–551 (TARTPLSEAE…RDREREYRHR (148 aa)) is sufficient for nuclear speckle localization. Residues 405 to 551 (ARTPLSEAEF…RDREREYRHR (147 aa)) are necessary for RNA-binding. Residues 481–551 (ESKSYGSGSR…RDREREYRHR (71 aa)) form a necessary for interaction with SRSF3, SRSF7 and TRA2B/SFRS10 region. The segment covering 489–503 (SRRERSRERDHSRSR) has biased composition (basic and acidic residues). An arg/Ser-rich domain region spans residues 490 to 551 (RRERSRERDH…RDREREYRHR (62 aa)). Phosphoserine occurs at positions 494, 500, 511, 513, and 525. The span at 504-514 (EKSRRHKSRSR) shows a compositional bias: basic residues. The sufficient for nuclear targeting stretch occupies residues 510 to 551 (KSRSRDRHDDYYRERSRERERHRDRDRDRDRERDREREYRHR). Basic and acidic residues predominate over residues 515 to 551 (DRHDDYYRERSRERERHRDRDRDRDRERDREREYRHR).

This sequence belongs to the RRM CPSF6/7 family. In terms of assembly, component of the cleavage factor Im (CFIm) complex which is a heterotetramer composed of two subunits of NUDT21/CPSF5 and two subunits of CPSF6 or CPSF7 or a heterodimer of CPSF6 and CPSF7. The cleavage factor Im (CFIm) complex associates with the CPSF and CSTF complexes to promote the assembly of the core mRNA 3'-processing machinery. Associates with the exon junction complex (EJC). Associates with the 80S ribosome particle. Interacts (via the RRM domain) with NUDT21/CPSF5; this interaction is direct and enhances binding to RNA. Interacts (via Arg/Ser-rich domain) with FIP1L1 (preferentially via unphosphorylated form and Arg/Glu/Asp-rich domain); this interaction mediates, at least in part, the interaction between the CFIm and CPSF complexes and may be inhibited by CPSF6 hyper-phosphorylation. Interacts (via N-terminus) with NXF1; this interaction is direct. Interacts with SRSF3. Interacts with SRSF7. Interacts with SNRNP70. Interacts with TRA2B/SFRS10. Interacts with UPF1. Interacts with UPF3B. Interacts with VIRMA. Interacts (via Arg/Ser-rich domain) with TNPO3; promoting nuclear import of CPSF6 independently of its phosphorylation status. Interacts with YTHDC1. In terms of processing, phosphorylated. Phosphorylated in the Arg/Ser-rich domain by SRPK1, in vitro. Symmetrically dimethylated on arginine residues by PRMT5 in a WDR77- and CLNS1A-dependent manner. Asymmetrically dimethylated on arginine residues by PRMT1. Post-translationally, symmetrically dimethylated on arginine residues in the GAR motif by PRMT5 in a WDR77- and CLNS1A-dependent manner. Asymmetrically dimethylated on arginine residues in the GAR motif by PRMT1. As to expression, expressed in testis. Expressed in male germ cells (at protein level).

The protein resides in the nucleus. It localises to the nucleoplasm. Its subcellular location is the nucleus speckle. It is found in the cytoplasm. Functionally, component of the cleavage factor Im (CFIm) complex that functions as an activator of the pre-mRNA 3'-end cleavage and polyadenylation processing required for the maturation of pre-mRNA into functional mRNAs. CFIm contributes to the recruitment of multiprotein complexes on specific sequences on the pre-mRNA 3'-end, so called cleavage and polyadenylation signals (pA signals). Most pre-mRNAs contain multiple pA signals, resulting in alternative cleavage and polyadenylation (APA) producing mRNAs with variable 3'-end formation. The CFIm complex acts as a key regulator of cleavage and polyadenylation site choice during APA through its binding to 5'-UGUA-3' elements localized in the 3'-untranslated region (UTR) for a huge number of pre-mRNAs. CPSF6 enhances NUDT21/CPSF5 binding to 5'-UGUA-3' elements localized upstream of pA signals and promotes RNA looping, and hence activates directly the mRNA 3'-processing machinery. Plays a role in mRNA export. This chain is Cleavage and polyadenylation specificity factor subunit 6, found in Mus musculus (Mouse).